An 82-amino-acid chain; its full sequence is MKTIFAVTLLLFAIYVPECMPCHQSGCSPGFCCWLTYPPTTATDPYSCVSNSTLGVSCGPCGCLQGYNCTSNGGCQLLRRVG.

The signal sequence occupies residues Met-1–Pro-21. 5 cysteine pairs are disulfide-bonded: Cys-22–Cys-33, Cys-27–Cys-48, Cys-32–Cys-61, Cys-58–Cys-69, and Cys-63–Cys-75.

Expressed by the venom gland.

It is found in the secreted. In terms of biological role, probable ion channel inhibitor. The protein is U17-hexatoxin-Hi1a of Hadronyche infensa (Fraser island funnel-web spider).